A 214-amino-acid polypeptide reads, in one-letter code: Probable nicotinate-nucleotide adenylyltransferase (214 aa).

It belongs to the NadD family.

It carries out the reaction nicotinate beta-D-ribonucleotide + ATP + H(+) = deamido-NAD(+) + diphosphate. Its pathway is cofactor biosynthesis; NAD(+) biosynthesis; deamido-NAD(+) from nicotinate D-ribonucleotide: step 1/1. Its function is as follows. Catalyzes the reversible adenylation of nicotinate mononucleotide (NaMN) to nicotinic acid adenine dinucleotide (NaAD). This is Probable nicotinate-nucleotide adenylyltransferase from Mycolicibacterium vanbaalenii (strain DSM 7251 / JCM 13017 / BCRC 16820 / KCTC 9966 / NRRL B-24157 / PYR-1) (Mycobacterium vanbaalenii).